The primary structure comprises 193 residues: Ribosome maturation factor RimM (193 aa).

Positions 97–172 (DDEFYLTDLV…LILADPPALV (76 aa)) constitute a PRC barrel domain. Residues 168-193 (PPALVGDHEGPEEKGLDENEELGDRD) are disordered. The span at 173 to 193 (GDHEGPEEKGLDENEELGDRD) shows a compositional bias: basic and acidic residues.

Belongs to the RimM family. Binds ribosomal protein uS19.

Its subcellular location is the cytoplasm. Functionally, an accessory protein needed during the final step in the assembly of 30S ribosomal subunit, possibly for assembly of the head region. Essential for efficient processing of 16S rRNA. May be needed both before and after RbfA during the maturation of 16S rRNA. It has affinity for free ribosomal 30S subunits but not for 70S ribosomes. In Caulobacter vibrioides (strain ATCC 19089 / CIP 103742 / CB 15) (Caulobacter crescentus), this protein is Ribosome maturation factor RimM.